A 545-amino-acid chain; its full sequence is Glucose-6-phosphate isomerase (545 aa).

Glu349 acts as the Proton donor in catalysis. Active-site residues include His380 and Lys509.

Belongs to the GPI family.

Its subcellular location is the cytoplasm. The enzyme catalyses alpha-D-glucose 6-phosphate = beta-D-fructose 6-phosphate. The protein operates within carbohydrate biosynthesis; gluconeogenesis. It participates in carbohydrate degradation; glycolysis; D-glyceraldehyde 3-phosphate and glycerone phosphate from D-glucose: step 2/4. Its function is as follows. Catalyzes the reversible isomerization of glucose-6-phosphate to fructose-6-phosphate. The protein is Glucose-6-phosphate isomerase of Chelativorans sp. (strain BNC1).